The primary structure comprises 272 residues: 2-dehydro-3-deoxyphosphooctonate aldolase (272 aa).

The protein belongs to the KdsA family.

The protein localises to the cytoplasm. It catalyses the reaction D-arabinose 5-phosphate + phosphoenolpyruvate + H2O = 3-deoxy-alpha-D-manno-2-octulosonate-8-phosphate + phosphate. Its pathway is carbohydrate biosynthesis; 3-deoxy-D-manno-octulosonate biosynthesis; 3-deoxy-D-manno-octulosonate from D-ribulose 5-phosphate: step 2/3. It participates in bacterial outer membrane biogenesis; lipopolysaccharide biosynthesis. In Pelobacter propionicus (strain DSM 2379 / NBRC 103807 / OttBd1), this protein is 2-dehydro-3-deoxyphosphooctonate aldolase.